A 235-amino-acid chain; its full sequence is tRNA pseudouridine synthase B (235 aa).

Asp45 serves as the catalytic Nucleophile.

This sequence belongs to the pseudouridine synthase TruB family. Type 1 subfamily.

The catalysed reaction is uridine(55) in tRNA = pseudouridine(55) in tRNA. Responsible for synthesis of pseudouridine from uracil-55 in the psi GC loop of transfer RNAs. The protein is tRNA pseudouridine synthase B of Chlamydia pneumoniae (Chlamydophila pneumoniae).